Reading from the N-terminus, the 730-residue chain is Hepatocyte growth factor (730 aa).

The N-terminal stretch at 1-31 (MWVTKLLPLLVLQQLLLHLLLLPVAVPRAEG) is a signal peptide. Gln-32 carries the pyrrolidone carboxylic acid modification. One can recognise a PAN domain in the interval 37 to 123 (NTLHEFKKSA…HEFDLYENKD (87 aa)). 8 disulfide bridges follow: Cys-70-Cys-96, Cys-74-Cys-84, Cys-128-Cys-206, Cys-149-Cys-189, Cys-177-Cys-201, Cys-211-Cys-288, Cys-232-Cys-271, and Cys-260-Cys-283. Kringle domains follow at residues 128 to 206 (CIIG…IPQC) and 211 to 288 (CMTC…IKMC). Asn-294 is a glycosylation site (N-linked (GlcNAc...) asparagine). 11 disulfide bridges follow: Cys-305–Cys-383, Cys-326–Cys-365, Cys-354–Cys-377, Cys-391–Cys-469, Cys-412–Cys-452, Cys-440–Cys-464, Cys-487–Cys-606, Cys-519–Cys-535, Cys-614–Cys-681, Cys-644–Cys-660, and Cys-671–Cys-699. Kringle domains are found at residues 305–383 (CIQG…IPKC) and 391–469 (CYRG…IFRC). Asn-402 carries N-linked (GlcNAc...) asparagine glycosylation. Residues 495–723 (VVNGIPTRTN…YAKWIHKIIL (229 aa)) form the Peptidase S1 domain. Residues Asn-568 and Asn-655 are each glycosylated (N-linked (GlcNAc...) asparagine).

It belongs to the peptidase S1 family. Plasminogen subfamily. As to quaternary structure, dimer of an alpha chain and a beta chain linked by a disulfide bond. Interacts with SRPX2; the interaction increases HGF mitogenic activity. The single-chain precursor undergoes proteolytic processing by TMPRSS13 resulting in an active two-chain form. The single-chain precursor undergoes proteolytic processing by HGFAC resulting in an active two-chain form.

In terms of biological role, potent mitogen for mature parenchymal hepatocyte cells, seems to be a hepatotrophic factor, and acts as a growth factor for a broad spectrum of tissues and cell types. Activating ligand for the receptor tyrosine kinase MET by binding to it and promoting its dimerization. Activates MAPK signaling following TMPRSS13 cleavage and activation. The protein is Hepatocyte growth factor (HGF) of Canis lupus familiaris (Dog).